The primary structure comprises 572 residues: Mitochondrial distribution and morphology protein 34 (572 aa).

Positions 1-195 (MAFNFNWSPL…LPAIIHRLSL (195 aa)) constitute an SMP-LTD domain. 4 disordered regions span residues 212–236 (TASANGEGPGQDPLASPPQDPVDAL), 355–426 (GAGR…PDND), 487–507 (HGASVLEKGKQDPDSSAGSSR), and 552–572 (ACGPFWDRHSQEESPPPAYGH). The span at 358-370 (RHSKAHARKRKKR) shows a compositional bias: basic residues. Positions 371 to 381 (VVDLRRPKTTD) are enriched in basic and acidic residues. The segment covering 387–400 (SDESSFTESTSAPS) has biased composition (polar residues).

The protein belongs to the MDM34 family. In terms of assembly, component of the ER-mitochondria encounter structure (ERMES) or MDM complex, composed of mmm1, mdm10, mdm12 and mdm34.

The protein localises to the mitochondrion outer membrane. Functionally, component of the ERMES/MDM complex, which serves as a molecular tether to connect the endoplasmic reticulum (ER) and mitochondria. Components of this complex are involved in the control of mitochondrial shape and protein biogenesis, and function in nonvesicular lipid trafficking between the ER and mitochondria. Mdm34 is required for the interaction of the ER-resident membrane protein mmm1 and the outer mitochondrial membrane-resident beta-barrel protein mdm10. This is Mitochondrial distribution and morphology protein 34 from Aspergillus fumigatus (strain ATCC MYA-4609 / CBS 101355 / FGSC A1100 / Af293) (Neosartorya fumigata).